The following is a 409-amino-acid chain: Peptidase T (409 aa).

Histidine 80 contributes to the Zn(2+) binding site. Residue aspartate 82 is part of the active site. Zn(2+) is bound at residue aspartate 143. Glutamate 177 serves as the catalytic Proton acceptor. Zn(2+) is bound by residues glutamate 178, aspartate 200, and histidine 382.

Belongs to the peptidase M20B family. Zn(2+) is required as a cofactor.

It is found in the cytoplasm. It carries out the reaction Release of the N-terminal residue from a tripeptide.. Cleaves the N-terminal amino acid of tripeptides. The polypeptide is Peptidase T (Enterococcus faecalis (strain ATCC 700802 / V583)).